We begin with the raw amino-acid sequence, 305 residues long: MSDMNKILQKWGASLRKGTDFDSWGQLVEAIDEYQILARQLQKEAQSPANSSDFTEDQKKTIGKIATCLELRSAALQYTQSQEGFTLEDVKKLEPILSSILTFNKEFPFDVQPVPLRRILAPGEEENLEVEEEEEDGGAGAGSPDLFPARVPGTLLPRLPSEPGMTLLTIKIEKIGLKDAGQCIDPYITVSVKDLNGIDLTPVQDTPMAVRKEDTYVHFNVEIEIQKHVEKLTKGAAIFFEFKHYKPKKRFTSTKCFAFMEMDEIRSGQIVIELYKKPTDFKRKRLQLLTKKPLYLHLLQTLLKD.

The span at 126-137 (ENLEVEEEEEDG) shows a compositional bias: acidic residues. The segment at 126–146 (ENLEVEEEEEDGGAGAGSPDL) is disordered. The interval 153–220 (GTLLPRLPSE…RKEDTYVHFN (68 aa)) is axin-binding. Positions 156 to 303 (LPRLPSEPGM…LYLHLLQTLL (148 aa)) constitute a C2 Aida-type domain.

Belongs to the AIDA family.

In terms of biological role, acts as a ventralizing factor during embryogenesis. Inhibits axin-mediated JNK activation by binding axin and disrupting axin homodimerization. This in turn antagonizes a Wnt/beta-catenin-independent dorsalization pathway activated by axin/JNK-signaling. In Xenopus laevis (African clawed frog), this protein is Axin interactor, dorsalization-associated protein B (aida-b).